The following is a 171-amino-acid chain: Ribosome maturation factor RimP (171 aa).

It belongs to the RimP family.

It is found in the cytoplasm. In terms of biological role, required for maturation of 30S ribosomal subunits. This is Ribosome maturation factor RimP from Anaeromyxobacter dehalogenans (strain 2CP-C).